The primary structure comprises 455 residues: Serine incorporator 2 (455 aa).

Helical transmembrane passes span 5–27 (LGACSLLSCASCLCGSAPCILCS), 40–57 (LIFTFFLFLGVLVSIIML), 96–118 (AVYRMCFATAAFFFFFTLLMLCV), 131–150 (GFWFFKFLILVGLTVGAFYI), 160–182 (FYFGVVGSFLFILIQLVLLIDFA), 202–224 (YAGLFFFTLLFYLLSIAAVALMF), 239–256 (FISLNLTFCVCVSIAAVL), 268–290 (LLQASVITLYTMFVTWSALSSIP), 317–339 (QWWDAPSIVGLIIFLLCTLFISL), 385–407 (TYSYSFFHFCLVLASLHVMMTLT), and 422–444 (WTAVWVKICASWAGLLLYLWTLV).

The protein belongs to the TDE1 family.

The protein resides in the cell membrane. It carries out the reaction a 1,2-diacyl-sn-glycero-3-phospho-L-serine(in) = a 1,2-diacyl-sn-glycero-3-phospho-L-serine(out). It catalyses the reaction a 1,2-diacyl-sn-glycero-3-phosphocholine(in) = a 1,2-diacyl-sn-glycero-3-phosphocholine(out). The enzyme catalyses a 1,2-diacyl-sn-glycero-3-phosphoethanolamine(in) = a 1,2-diacyl-sn-glycero-3-phosphoethanolamine(out). Non-ATP-dependent, non-specific lipid transporter for phosphatidylserine, phosphatidylcholine, and phosphatidylethanolamine. Functions as a scramblase that flips lipids in both directions across the membrane. In contrast to SERINC3 and SERINC5, has no effect on HIV-1 particles infectivity. The protein is Serine incorporator 2 of Homo sapiens (Human).